Reading from the N-terminus, the 448-residue chain is Selenide, water dikinase 2 (448 aa).

Ala2 carries the N-acetylalanine modification. Residue Ser46 is modified to Phosphoserine. Residue Sec60 is part of the active site. A non-standard amino acid (selenocysteine) is located at residue Sec60. Lys63 lines the ATP pocket. The segment at 85–107 is disordered; sequence LGRGLVGGQEEASQEAGLPAGAG. Phosphoserine is present on Ser97. ATP is bound by residues 118 to 120, Asp138, Asp161, and 212 to 215; these read GMD and GGQT. Asp120 provides a ligand contact to Mg(2+). Asp161 is a Mg(2+) binding site. Asp316 lines the Mg(2+) pocket.

It belongs to the selenophosphate synthase 1 family. Class I subfamily. As to quaternary structure, homodimer. Mg(2+) serves as cofactor. Truncated SEPHS2 proteins produced by failed UGA/Sec decoding are ubiquitinated by the CRL2(KLHDC3) complex, which recognizes the glycine (Gly) at the C-terminus of truncated SEPHS2 proteins.

The catalysed reaction is hydrogenselenide + ATP + H2O = selenophosphate + AMP + phosphate + 2 H(+). Synthesizes selenophosphate from selenide and ATP. The chain is Selenide, water dikinase 2 (SEPHS2) from Homo sapiens (Human).